We begin with the raw amino-acid sequence, 193 residues long: Peptidyl-tRNA hydrolase 1 (193 aa).

Residue Y27 coordinates tRNA. The active-site Proton acceptor is H32. 3 residues coordinate tRNA: F80, N82, and N128.

Belongs to the PTH family. As to quaternary structure, monomer.

The protein resides in the cytoplasm. It carries out the reaction an N-acyl-L-alpha-aminoacyl-tRNA + H2O = an N-acyl-L-amino acid + a tRNA + H(+). Functionally, hydrolyzes ribosome-free peptidyl-tRNAs (with 1 or more amino acids incorporated), which drop off the ribosome during protein synthesis, or as a result of ribosome stalling. In terms of biological role, catalyzes the release of premature peptidyl moieties from peptidyl-tRNA molecules trapped in stalled 50S ribosomal subunits, and thus maintains levels of free tRNAs and 50S ribosomes. The chain is Peptidyl-tRNA hydrolase 1 from Corynebacterium jeikeium (strain K411).